Reading from the N-terminus, the 218-residue chain is MMP 1-O-methyltransferase (218 aa).

Phe20, Gly46, Ser52, Asp71, Gly75, and Ser124 together coordinate S-adenosyl-L-methionine. Mg(2+) is bound at residue Asp141. His144 acts as the Proton acceptor in catalysis. Residue Arg151 participates in S-adenosyl-L-methionine binding. Residues His169 and Asp170 each coordinate Mg(2+).

It belongs to the methyltransferase superfamily. Homodimer. Requires Mg(2+) as cofactor.

The catalysed reaction is 3,3'-di-O-methyl-4alpha-mannobiose + S-adenosyl-L-methionine = 1,3,3'-tri-O-methyl-4alpha-mannobiose + S-adenosyl-L-homocysteine + H(+). With respect to regulation, inhibited by EDTA. Involved in the biosynthesis of 3-O-methylmannose polysaccharides (MMP), which are intracellular polymethylated polysaccharides implicated in the modulation of fatty acid metabolism in non-tuberculous mycobacteria. Specifically methylates the 1-OH position of 3,3'-di-O-methyl-4alpha-mannobiose, a probable early precursor of MMP, yielding the reducing end dimannoside of MMP. This is MMP 1-O-methyltransferase from Mycolicibacterium hassiacum (strain DSM 44199 / CIP 105218 / JCM 12690 / 3849) (Mycobacterium hassiacum).